The following is a 284-amino-acid chain: Methylglyoxal reductase YeaE (284 aa).

It belongs to the aldo/keto reductase family.

It catalyses the reaction hydroxyacetone + NADP(+) = methylglyoxal + NADPH + H(+). It carries out the reaction a primary alcohol + NADP(+) = an aldehyde + NADPH + H(+). Its function is as follows. Aldo-keto reductase that contributes to cellular methylglyoxal detoxification by catalyzing the NADPH-dependent conversion of methylglyoxal to acetol. It also exhibits activity with glyoxal and probably plays a significant role in detoxification of glyoxal in vivo. Can also use aromatic aldehydes such as 4-nitrobenzaldehyde, 3-nitrobenzaldehyde and benzaldehyde, and phenylglyoxal. This is Methylglyoxal reductase YeaE (yeaE) from Escherichia coli (strain K12).